Consider the following 599-residue polypeptide: Beta-glucuronidase (599 aa).

The D-glucuronate site is built by aspartate 160 and asparagine 407. The active-site Proton donor is the glutamate 408. D-glucuronate contacts are provided by asparagine 462, tyrosine 468, glutamate 501, tryptophan 546, and lysine 565. Residue glutamate 501 is the Nucleophile of the active site. An N-K motif motif is present at residues 563-565; the sequence is NHK.

The protein belongs to the glycosyl hydrolase 2 family.

It catalyses the reaction a beta-D-glucuronoside + H2O = D-glucuronate + an alcohol. Its activity is regulated as follows. Inhibited by a set of synthetic compounds like thio-urea derivatives and analogs. Inhibitors of gut microbial beta-glucuronidases are expected to block the reactivation of glucuronidated cancer drugs, and to alleviate drug-induced GI toxicity. Displays beta-glucuronidase activity with the artificial substrate p-nitrophenyl-beta-D-glucuronide (PNPG). Is likely capable of scavenging glucuronate from a range of chemically distinct xenobiotic and endobiotic glucuronides present in the gastrointestinal (GI) tract, to be able to utilize these diverse sources of carbon. As part of the GI microbiome, this enzyme would be able to reactivate glucuronide drug conjugates, such reactivated compounds can significantly damage the GI tract. The polypeptide is Beta-glucuronidase (Streptococcus agalactiae serotype V (strain ATCC BAA-611 / 2603 V/R)).